A 259-amino-acid polypeptide reads, in one-letter code: Ubiquinol-cytochrome c reductase complex assembly factor 1 (259 aa).

Belongs to the CBP3 family. In terms of assembly, interacts with sloth1; the interaction is probably involved in the assembly and stability of the mitochondrial ubiquinol-cytochrome c reductase complex.

Its subcellular location is the mitochondrion inner membrane. Its function is as follows. Required for the assembly of the ubiquinol-cytochrome c reductase complex (mitochondrial respiratory chain complex III or cytochrome b-c1 complex). May be involved in cytochrome b translation and/or stability. The chain is Ubiquinol-cytochrome c reductase complex assembly factor 1 from Drosophila melanogaster (Fruit fly).